The chain runs to 276 residues: Aquaporin-1 (276 aa).

The Cytoplasmic portion of the chain corresponds to 1–10 (MLDAEQKKNY). Residues 11-31 (VAGAFGEFVGTAYFLFMGVGG) form a helical membrane-spanning segment. The Extracellular portion of the chain corresponds to 32 to 46 (AVNFLNNAAGSPLPG). A helical transmembrane segment spans residues 47-67 (FAIPFCFGFSLFVNVFIWAPI). The Cytoplasmic segment spans residues 68-93 (SGGVFNPSITIALMATNPKDFPWYRG). An NPA 1 motif is present at residues 73–75 (NPS). The chain crosses the membrane as a helical span at residues 94-114 (ILYIVSQFLGALFGSWLIDLI). The Extracellular segment spans residues 115 to 133 (QPEAPNAATLLADGVSVAQ). A helical membrane pass occupies residues 134-154 (GLFMEMFATSVLTMAVLILAG). Over 155 to 159 (ERYGK) the chain is Cytoplasmic. The helical transmembrane segment at 160 to 180 (YLAPFGIGMSLFISALCAGPY) threads the bilayer. Residues 181–204 (TGASLNPARTLGPAIVANQYGRAH) are Extracellular-facing. The NPA 2 motif lies at 186–188 (NPA). The chain crosses the membrane as a helical span at residues 205–225 (WIYYVGPTLGSLLAAGYWHIL). The Cytoplasmic portion of the chain corresponds to 226-276 (RILNIDVVDLKNVLNKCKKCGKEDPRISLKHCEECLKDDPKPEKYDIESQN).

Belongs to the MIP/aquaporin (TC 1.A.8) family.

It is found in the cell membrane. The catalysed reaction is H2O(in) = H2O(out). With respect to regulation, polyethylene glycol (PEG) stimulates whereas glycerol inhibits the aquaporin activity. Water channel required to facilitate the transport of water across membranes. Stimulates plant drought tolerance by facilitating the transport of water from the arbuscular mycorrhiza fungus to host plants. The chain is Aquaporin-1 from Rhizophagus irregularis (Arbuscular mycorrhizal fungus).